A 218-amino-acid chain; its full sequence is 3,4-dihydroxy-2-butanone 4-phosphate synthase (218 aa).

D-ribulose 5-phosphate-binding positions include 38–39 (RE), D43, 151–155 (RRGHT), and E175. Residue E39 participates in Mg(2+) binding. Residue H154 coordinates Mg(2+).

It belongs to the DHBP synthase family. In terms of assembly, homodimer. It depends on Mg(2+) as a cofactor. Mn(2+) serves as cofactor.

It catalyses the reaction D-ribulose 5-phosphate = (2S)-2-hydroxy-3-oxobutyl phosphate + formate + H(+). Its pathway is cofactor biosynthesis; riboflavin biosynthesis; 2-hydroxy-3-oxobutyl phosphate from D-ribulose 5-phosphate: step 1/1. In terms of biological role, catalyzes the conversion of D-ribulose 5-phosphate to formate and 3,4-dihydroxy-2-butanone 4-phosphate. The protein is 3,4-dihydroxy-2-butanone 4-phosphate synthase of Vibrio vulnificus (strain CMCP6).